The following is a 293-amino-acid chain: SAGA-associated factor 29 (293 aa).

Residues 3 to 88 (LVSADSRIAE…KALDKIAEIK (86 aa)) adopt a coiled-coil conformation. The SGF29 C-terminal domain occupies 152-293 (GDYVAKPGDK…VVACKEPKKK (142 aa)). 2 histone H3K4me3 N-terminus binding regions span residues 194 to 196 (DID) and 240 to 243 (QTTC). The tract at residues 264–266 (FED) is histone H3K4me3 binding. Lys288 is modified (N6-acetyllysine).

It belongs to the SGF29 family. In terms of assembly, interacts with dimethylated and trimethylated 'Lys-4' of histone H3 (H3K4me2 and H3K4me3), with a preference for the trimethylated form (H3K4me3). Component of some SAGA-type complexes. Component of the ADA2A-containing complex (ATAC), composed of KAT14, KAT2A, TADA2L, TADA3L, ZZ3, MBIP, WDR5, YEATS2, CCDC101 and DR1. Interacts with (methylated) CGAS. Interacts with TADA3L, GCN5L2, SUPT3H and MYC. As to expression, widely expressed with highest levels in testis. Highly expressed in hepatoma and other tumor cell lines.

The protein resides in the nucleus. Functionally, chromatin reader component of some histone acetyltransferase (HAT) SAGA-type complexes like the TFTC-HAT, ATAC or STAGA complexes. SGF29 specifically recognizes and binds methylated 'Lys-4' of histone H3 (H3K4me), with a preference for trimethylated form (H3K4me3). In the SAGA-type complexes, SGF29 is required to recruit complexes to H3K4me. Involved in the response to endoplasmic reticulum (ER) stress by recruiting the SAGA complex to H3K4me, thereby promoting histone H3 acetylation and cell survival. Also binds non-histone proteins that are methylated on Lys residues: specifically recognizes and binds CGAS monomethylated on 'Lys-491'. May be involved in MYC-mediated oncogenic transformation. This is SAGA-associated factor 29 from Rattus norvegicus (Rat).